We begin with the raw amino-acid sequence, 188 residues long: NAD(P)H-quinone oxidoreductase subunit 6, chloroplastic (188 aa).

5 helical membrane passes run 10–30 (GILLIIELGILLGSMGVILLN), 32–52 (IVQSAFSLGLTFISISLLYLV), 61–81 (AQVLIYVGAINVLIVFSVMLI), 97–117 (GNNITLIVCTSLFLFLVSIIL), and 153–173 (FLLPFELLSVLLLVALVGAIT).

It belongs to the complex I subunit 6 family. As to quaternary structure, NDH is composed of at least 16 different subunits, 5 of which are encoded in the nucleus.

It is found in the plastid. The protein resides in the chloroplast thylakoid membrane. The enzyme catalyses a plastoquinone + NADH + (n+1) H(+)(in) = a plastoquinol + NAD(+) + n H(+)(out). The catalysed reaction is a plastoquinone + NADPH + (n+1) H(+)(in) = a plastoquinol + NADP(+) + n H(+)(out). In terms of biological role, NDH shuttles electrons from NAD(P)H:plastoquinone, via FMN and iron-sulfur (Fe-S) centers, to quinones in the photosynthetic chain and possibly in a chloroplast respiratory chain. The immediate electron acceptor for the enzyme in this species is believed to be plastoquinone. Couples the redox reaction to proton translocation, and thus conserves the redox energy in a proton gradient. The polypeptide is NAD(P)H-quinone oxidoreductase subunit 6, chloroplastic (ndhG) (Psilotum nudum (Whisk fern)).